A 779-amino-acid chain; its full sequence is Acyl-homoserine lactone acylase PvdQ (779 aa).

The first 25 residues, Met-1–Ala-25, serve as a signal peptide directing secretion. Positions Ser-202 to Gly-223 are cleaved as a propeptide — spacer peptide. Residue Ser-224 is the Nucleophile of the active site. Residues Glu-731–Ala-746 show a composition bias toward polar residues. The segment at Glu-731 to Trp-752 is disordered.

It belongs to the peptidase S45 family. Heterodimer of an alpha subunit and a beta subunit processed from the same precursor.

Its subcellular location is the periplasm. The catalysed reaction is an N-acyl-L-homoserine lactone + H2O = L-homoserine lactone + a carboxylate. Catalyzes the deacylation of acyl-homoserine lactone (AHL or acyl-HSL), releasing homoserine lactone (HSL) and the corresponding fatty acid. Possesses a specificity for the degradation of long-chain acyl-HSLs (side chains of 11 to 14 carbons in length). The sequence is that of Acyl-homoserine lactone acylase PvdQ (pvdQ) from Pseudomonas savastanoi pv. phaseolicola (strain 1448A / Race 6) (Pseudomonas syringae pv. phaseolicola (strain 1448A / Race 6)).